The following is a 168-amino-acid chain: Bifunctional protein PyrR (168 aa).

Substrate contacts are provided by residues 36-37, R77, 94-102, and V151; these read TG and DDVLMSGRT. The short motif at 90-102 is the PRPP-binding element; that stretch reads LVLIDDVLMSGRT.

The protein belongs to the purine/pyrimidine phosphoribosyltransferase family. PyrR subfamily.

It catalyses the reaction UMP + diphosphate = 5-phospho-alpha-D-ribose 1-diphosphate + uracil. Functionally, regulates the transcription of the pyrimidine nucleotide (pyr) operon in response to exogenous pyrimidines. Its function is as follows. Also displays a weak uracil phosphoribosyltransferase activity which is not physiologically significant. The protein is Bifunctional protein PyrR of Pseudomonas fluorescens.